A 311-amino-acid chain; its full sequence is uncharacterized protein (311 aa).

The next 10 membrane-spanning stretches (helical) occupy residues 13 to 33 (STAV…GFFS), 41 to 61 (FELV…CWLA), 76 to 96 (LQTL…FKSF), 103 to 123 (IAIS…SFFY), 128 to 148 (NVIS…ISGI), 157 to 177 (LMGS…FTTL), 192 to 212 (FLQT…GAFA), 218 to 238 (NWIM…LLFF), 248 to 268 (FISI…TVFT), and 272 to 292 (PDLY…LTLV). EamA domains are found at residues 24-147 (VIFG…LISG) and 166-292 (VLAA…LTLV).

It belongs to the EamA transporter family.

The protein resides in the cell membrane. This is an uncharacterized protein from Bacillus subtilis (strain 168).